The following is a 428-amino-acid chain: Serine--tRNA ligase (428 aa).

Residue Thr235–Glu237 coordinates L-serine. Position 266-268 (Arg266–Glu268) interacts with ATP. An L-serine-binding site is contributed by Glu289. Glu353–Ser356 is a binding site for ATP. An L-serine-binding site is contributed by Ser389.

This sequence belongs to the class-II aminoacyl-tRNA synthetase family. Type-1 seryl-tRNA synthetase subfamily. In terms of assembly, homodimer. The tRNA molecule binds across the dimer.

It is found in the cytoplasm. The catalysed reaction is tRNA(Ser) + L-serine + ATP = L-seryl-tRNA(Ser) + AMP + diphosphate + H(+). The enzyme catalyses tRNA(Sec) + L-serine + ATP = L-seryl-tRNA(Sec) + AMP + diphosphate + H(+). The protein operates within aminoacyl-tRNA biosynthesis; selenocysteinyl-tRNA(Sec) biosynthesis; L-seryl-tRNA(Sec) from L-serine and tRNA(Sec): step 1/1. Functionally, catalyzes the attachment of serine to tRNA(Ser). Is also able to aminoacylate tRNA(Sec) with serine, to form the misacylated tRNA L-seryl-tRNA(Sec), which will be further converted into selenocysteinyl-tRNA(Sec). The sequence is that of Serine--tRNA ligase from Shewanella loihica (strain ATCC BAA-1088 / PV-4).